The primary structure comprises 147 residues: uncharacterized protein (147 aa).

The next 2 helical transmembrane spans lie at 21–41 and 67–87; these read LMLW…IVFV and ALFG…SIPL.

Its subcellular location is the cell membrane. This is an uncharacterized protein from Ureaplasma parvum serovar 3 (strain ATCC 700970).